The sequence spans 353 residues: Heterogeneous nuclear ribonucleoproteins A2/B1 (353 aa).

M1 is subject to N-acetylmethionine. T4 carries the post-translational modification Phosphothreonine. Residues P9–R15 carry the Nuclear localization signal motif. RRM domains are found at residues R21–K104 and K112–Q191. Residue K22 forms a Glycyl lysine isopeptide (Lys-Gly) (interchain with G-Cter in SUMO2) linkage. Residue S29 is modified to Phosphoserine. R38 is modified (omega-N-methylarginine). At S85 the chain carries Phosphoserine. Position 104 is an N6,N6-dimethyllysine; alternate (K104). A Glycyl lysine isopeptide (Lys-Gly) (interchain with G-Cter in SUMO2); alternate cross-link involves residue K104. Glycyl lysine isopeptide (Lys-Gly) (interchain with G-Cter in SUMO2) cross-links involve residues K112, K120, and K137. T140 is subject to Phosphothreonine. S149 carries the phosphoserine modification. K152 is covalently cross-linked (Glycyl lysine isopeptide (Lys-Gly) (interchain with G-Cter in SUMO2)). Residue T159 is modified to Phosphothreonine. Residues K168 and K173 each participate in a glycyl lysine isopeptide (Lys-Gly) (interchain with G-Cter in SUMO2); alternate cross-link. N6-acetyllysine; alternate is present on residues K168 and K173. Phosphothreonine is present on T176. K186 is covalently cross-linked (Glycyl lysine isopeptide (Lys-Gly) (interchain with G-Cter in SUMO2)). S189 and S201 each carry phosphoserine. Residues M193–Y353 are disordered. The span at G202–P223 shows a compositional bias: gly residues. An Asymmetric dimethylarginine; alternate modification is found at R203. R203 is modified (dimethylated arginine; alternate). R203 carries the omega-N-methylarginine; alternate modification. The residue at position 212 (S212) is a Phosphoserine. Residue R213 is modified to Asymmetric dimethylarginine; alternate. Residue R213 is modified to Dimethylated arginine; alternate. An Omega-N-methylarginine; alternate modification is found at R213. S225 bears the Phosphoserine mark. Residue R228 is modified to Omega-N-methylarginine. Residues S231 and S236 each carry the phosphoserine modification. Position 238 is an omega-N-methylarginine (R238). S259 carries the phosphoserine modification. At R266 the chain carries Asymmetric dimethylarginine; alternate. The residue at position 266 (R266) is an Omega-N-methylarginine; alternate. The segment at Q308–Y347 is nuclear targeting sequence. Positions N320–Y353 are enriched in gly residues. Position 324 is a phosphoserine (S324). Residue R325 is modified to Omega-N-methylarginine. Y331 carries the phosphotyrosine modification. Residues S341 and S344 each carry the phosphoserine modification. Phosphotyrosine is present on Y347. At R350 the chain carries Omega-N-methylarginine.

Homodimer; dimerization is required for nucleocytoplasmic translocation. Identified in the spliceosome C complex. Identified in a IGF2BP1-dependent mRNP granule complex containing untranslated mRNAs. Interacts with IGF2BP1. Interacts with C9orf72. Interacts with DGCR8. Interacts with TARDBP. Interacts with CKAP5. Interacts with TBK1. Interacts with STING1. Interacts with SRC. Interacts with PPIA/CYPA. Interacts (via C-terminus) with FAM76B; the interaction results in retention of HNRNPA2B1 in the nucleus and inhibition of the NF-kappa-B-mediated inflammatory pathway. Interacts with NF-kappa-B inhibitors NFKBIA and NFKBIE; the interaction may be mediated by the RRM2 domain of HNRNPA2B1, and HNRNPA2B1 may interact simultaneously with FAM76B and either NFKBIA or NFKBIE to form a complex. Asymmetric dimethylation at Arg-266 constitutes the major methylation site. According to a report, methylation affects subcellular location and promotes nuclear localization. According to another report, methylation at Arg-266 does not influence nucleocytoplasmic shuttling. In terms of processing, sumoylated in exosomes, promoting miRNAs-binding. In the brain, isoform A2 and isoform B1 are abundant in large ganglion-type neurons, such as Purkinje cells, and are less abundant in neighboring glia cells. Isoform A2 is more abundant than isoform B1 in brain. In testis, isoform A2 and isoform B1 are present in spermatogonia and spermatocytes, but not in spermatids or sperm. Isoform A2 is more abundant in the adrenal medulla than in the cortical cells. Isoform B1 is found in both adrenal medulla and cortical cells. Isoform A2 is more abundant than isoform B1 in the adrenal gland. Isoform A2 and isoform B1 are both detected in pancreas and kidney, and at lower levels in heart and lung. Isoform B1 is more abundant than isoform A2 in heart, lung and intestine (at protein level). Isoform A2b and isoform B1b are testis-specific.

It localises to the nucleus. The protein resides in the cytoplasm. It is found in the nucleoplasm. Its subcellular location is the cytoplasmic granule. The protein localises to the secreted. It localises to the extracellular exosome. In terms of biological role, heterogeneous nuclear ribonucleoprotein (hnRNP) that associates with nascent pre-mRNAs, packaging them into hnRNP particles. The hnRNP particle arrangement on nascent hnRNA is non-random and sequence-dependent and serves to condense and stabilize the transcripts and minimize tangling and knotting. Packaging plays a role in various processes such as transcription, pre-mRNA processing, RNA nuclear export, subcellular location, mRNA translation and stability of mature mRNAs. Forms hnRNP particles with at least 20 other different hnRNP and heterogeneous nuclear RNA in the nucleus. Involved in transport of specific mRNAs to the cytoplasm in oligodendrocytes and neurons: acts by specifically recognizing and binding the A2RE (21 nucleotide hnRNP A2 response element) or the A2RE11 (derivative 11 nucleotide oligonucleotide) sequence motifs present on some mRNAs, and promotes their transport to the cytoplasm. Specifically binds single-stranded telomeric DNA sequences, protecting telomeric DNA repeat against endonuclease digestion. Also binds other RNA molecules, such as primary miRNA (pri-miRNAs): acts as a nuclear 'reader' of the N6-methyladenosine (m6A) mark by specifically recognizing and binding a subset of nuclear m6A-containing pri-miRNAs. Binding to m6A-containing pri-miRNAs promotes pri-miRNA processing by enhancing binding of DGCR8 to pri-miRNA transcripts. Involved in miRNA sorting into exosomes following sumoylation, possibly by binding (m6A)-containing pre-miRNAs. Acts as a regulator of efficiency of mRNA splicing, possibly by binding to m6A-containing pre-mRNAs. Plays a role in the splicing of pyruvate kinase PKM by binding repressively to sequences flanking PKM exon 9, inhibiting exon 9 inclusion and resulting in exon 10 inclusion and production of the PKM M2 isoform. Also plays a role in the activation of the innate immune response. Mechanistically, senses the presence of viral DNA in the nucleus, homodimerizes and is demethylated by JMJD6. In turn, translocates to the cytoplasm where it activates the TBK1-IRF3 pathway, leading to interferon alpha/beta production. The chain is Heterogeneous nuclear ribonucleoproteins A2/B1 from Rattus norvegicus (Rat).